Reading from the N-terminus, the 411-residue chain is UPF0761 membrane protein PSPA7_4558 (411 aa).

6 helical membrane passes run 36 to 56, 92 to 112, 132 to 152, 174 to 194, 207 to 229, and 244 to 264; these read LFAV…IPAF, HLTW…LVTI, FLLY…GFAV, LLGL…YSAV, GGMF…VSLF, and IFLL…VLVC.

The protein belongs to the UPF0761 family.

The protein localises to the cell inner membrane. The sequence is that of UPF0761 membrane protein PSPA7_4558 from Pseudomonas paraeruginosa (strain DSM 24068 / PA7) (Pseudomonas aeruginosa (strain PA7)).